Consider the following 453-residue polypeptide: Obtusifoliol 14-alpha demethylase (453 aa).

Residue C395 coordinates heme.

Belongs to the cytochrome P450 family. It depends on heme as a cofactor.

The protein resides in the membrane. The enzyme catalyses a 14alpha-methyl steroid + 3 reduced [NADPH--hemoprotein reductase] + 3 O2 = a Delta(14) steroid + formate + 3 oxidized [NADPH--hemoprotein reductase] + 4 H2O + 4 H(+). Its pathway is steroid biosynthesis; zymosterol biosynthesis; zymosterol from lanosterol: step 1/6. Its function is as follows. Catalyzes the 14-alpha demethylation of obtusifoliol to 4 alpha-methyl-5 alpha-ergosta-8,14,24(28)-trien-3 beta-ol. The protein is Obtusifoliol 14-alpha demethylase (CYP51) of Triticum aestivum (Wheat).